We begin with the raw amino-acid sequence, 177 residues long: MAELSTIARPYAKAAFDFAVEHKAVESWTEMLTFASLVSENESIKPLLNGTLASTQLATLFIKVCGEQVNEQGQNLIKVMAENGRLGILSTVSLLFAEYRNEWAKEVEADVVSATELSSEQQQQISVSLEKRLARKVKLNCSIDASLIGGVIIKSGDLVIDGSVSGKLSRLSEKLQS.

The protein belongs to the ATPase delta chain family. In terms of assembly, F-type ATPases have 2 components, F(1) - the catalytic core - and F(0) - the membrane proton channel. F(1) has five subunits: alpha(3), beta(3), gamma(1), delta(1), epsilon(1). F(0) has three main subunits: a(1), b(2) and c(10-14). The alpha and beta chains form an alternating ring which encloses part of the gamma chain. F(1) is attached to F(0) by a central stalk formed by the gamma and epsilon chains, while a peripheral stalk is formed by the delta and b chains.

The protein resides in the cell inner membrane. Functionally, f(1)F(0) ATP synthase produces ATP from ADP in the presence of a proton or sodium gradient. F-type ATPases consist of two structural domains, F(1) containing the extramembraneous catalytic core and F(0) containing the membrane proton channel, linked together by a central stalk and a peripheral stalk. During catalysis, ATP synthesis in the catalytic domain of F(1) is coupled via a rotary mechanism of the central stalk subunits to proton translocation. Its function is as follows. This protein is part of the stalk that links CF(0) to CF(1). It either transmits conformational changes from CF(0) to CF(1) or is implicated in proton conduction. In Shewanella frigidimarina (strain NCIMB 400), this protein is ATP synthase subunit delta.